The sequence spans 101 residues: Small ribosomal subunit protein uS14 (101 aa).

This sequence belongs to the universal ribosomal protein uS14 family. As to quaternary structure, part of the 30S ribosomal subunit. Contacts proteins S3 and S10.

Functionally, binds 16S rRNA, required for the assembly of 30S particles and may also be responsible for determining the conformation of the 16S rRNA at the A site. This Alkalilimnicola ehrlichii (strain ATCC BAA-1101 / DSM 17681 / MLHE-1) protein is Small ribosomal subunit protein uS14.